The primary structure comprises 170 residues: Bifunctional protein PyrR (170 aa).

The PRPP-binding motif lies at 90 to 102; that stretch reads LVLVDDVLMSGRT.

The protein belongs to the purine/pyrimidine phosphoribosyltransferase family. PyrR subfamily.

It catalyses the reaction UMP + diphosphate = 5-phospho-alpha-D-ribose 1-diphosphate + uracil. Regulates the transcription of the pyrimidine nucleotide (pyr) operon in response to exogenous pyrimidines. In terms of biological role, also displays a weak uracil phosphoribosyltransferase activity which is not physiologically significant. This chain is Bifunctional protein PyrR, found in Pseudomonas paraeruginosa (strain DSM 24068 / PA7) (Pseudomonas aeruginosa (strain PA7)).